Reading from the N-terminus, the 212-residue chain is Thymidylate kinase (212 aa).

Gly-11–Ser-18 contributes to the ATP binding site.

Belongs to the thymidylate kinase family.

The catalysed reaction is dTMP + ATP = dTDP + ADP. Functionally, phosphorylation of dTMP to form dTDP in both de novo and salvage pathways of dTTP synthesis. The protein is Thymidylate kinase of Streptococcus gordonii (strain Challis / ATCC 35105 / BCRC 15272 / CH1 / DL1 / V288).